The chain runs to 171 residues: Transcription factor E (171 aa).

Residues 1–81 (MLNLAKELVG…YWKVNVNQIN (81 aa)) enclose the HTH TFE/IIEalpha-type domain.

This sequence belongs to the TFE family. In terms of assembly, monomer. Interaction with RNA polymerase subunits RpoF and RpoE is necessary for Tfe stimulatory transcription activity. Able to interact with Tbp and RNA polymerase in the absence of DNA promoter. Interacts both with the preinitiation and elongation complexes.

Transcription factor that plays a role in the activation of archaeal genes transcribed by RNA polymerase. Facilitates transcription initiation by enhancing TATA-box recognition by TATA-box-binding protein (Tbp), and transcription factor B (Tfb) and RNA polymerase recruitment. Not absolutely required for transcription in vitro, but particularly important in cases where Tbp or Tfb function is not optimal. It dynamically alters the nucleic acid-binding properties of RNA polymerases by stabilizing the initiation complex and destabilizing elongation complexes. Seems to translocate with the RNA polymerase following initiation and acts by binding to the non template strand of the transcription bubble in elongation complexes. This chain is Transcription factor E, found in Sulfolobus acidocaldarius (strain ATCC 33909 / DSM 639 / JCM 8929 / NBRC 15157 / NCIMB 11770).